The sequence spans 454 residues: Probable mitochondrial saccharopine dehydrogenase-like oxidoreductase At5g39410 (454 aa).

Residue M1 is modified to N-acetylmethionine. A disordered region spans residues 215–234; sequence RRSRPRRPRPTICGPPAKGP.

Belongs to the saccharopine dehydrogenase family.

It is found in the mitochondrion membrane. The protein is Probable mitochondrial saccharopine dehydrogenase-like oxidoreductase At5g39410 of Arabidopsis thaliana (Mouse-ear cress).